The chain runs to 190 residues: Large ribosomal subunit protein uL6A (190 aa).

It belongs to the universal ribosomal protein uL6 family. Component of the large ribosomal subunit (LSU). Mature yeast ribosomes consist of a small (40S) and a large (60S) subunit. The 40S small subunit contains 1 molecule of ribosomal RNA (18S rRNA) and at least 33 different proteins. The large 60S subunit contains 3 rRNA molecules (25S, 5.8S and 5S rRNA) and at least 46 different proteins. uL6 lines the binding pocket for eukaryotic elongation factor 2 (eEF2).

It localises to the cytoplasm. It is found in the nucleus. In terms of biological role, component of the ribosome, a large ribonucleoprotein complex responsible for the synthesis of proteins in the cell. The small ribosomal subunit (SSU) binds messenger RNAs (mRNAs) and translates the encoded message by selecting cognate aminoacyl-transfer RNA (tRNA) molecules. The large subunit (LSU) contains the ribosomal catalytic site termed the peptidyl transferase center (PTC), which catalyzes the formation of peptide bonds, thereby polymerizing the amino acids delivered by tRNAs into a polypeptide chain. The nascent polypeptides leave the ribosome through a tunnel in the LSU and interact with protein factors that function in enzymatic processing, targeting, and the membrane insertion of nascent chains at the exit of the ribosomal tunnel. This is Large ribosomal subunit protein uL6A (rpl901) from Schizosaccharomyces pombe (strain 972 / ATCC 24843) (Fission yeast).